The following is a 1026-amino-acid chain: Exportin-T (1026 aa).

The protein belongs to the exportin family.

It is found in the nucleus. Its subcellular location is the cytoplasm. Functionally, tRNA nucleus export receptor which facilitates tRNA translocation across the nuclear pore complex. Involved in pre-tRNA splicing, probably by affecting the interaction of pre-tRNA with splicing endonuclease. This is Exportin-T (los1) from Neurospora crassa (strain ATCC 24698 / 74-OR23-1A / CBS 708.71 / DSM 1257 / FGSC 987).